Consider the following 597-residue polypeptide: Aspartate--tRNA(Asp/Asn) ligase (597 aa).

L-aspartate is bound at residue E178. The tract at residues 202–205 is aspartate; the sequence is QLFK. R224 contributes to the L-aspartate binding site. Residues 224–226 and Q233 contribute to the ATP site; that span reads RDE. H458 is an L-aspartate binding site. E488 is a binding site for ATP. An L-aspartate-binding site is contributed by R495. Position 540 to 543 (540 to 543) interacts with ATP; that stretch reads GLDR.

It belongs to the class-II aminoacyl-tRNA synthetase family. Type 1 subfamily. In terms of assembly, homodimer.

The protein resides in the cytoplasm. The enzyme catalyses tRNA(Asx) + L-aspartate + ATP = L-aspartyl-tRNA(Asx) + AMP + diphosphate. In terms of biological role, aspartyl-tRNA synthetase with relaxed tRNA specificity since it is able to aspartylate not only its cognate tRNA(Asp) but also tRNA(Asn). Reaction proceeds in two steps: L-aspartate is first activated by ATP to form Asp-AMP and then transferred to the acceptor end of tRNA(Asp/Asn). The sequence is that of Aspartate--tRNA(Asp/Asn) ligase from Cyanothece sp. (strain PCC 7425 / ATCC 29141).